A 1325-amino-acid polypeptide reads, in one-letter code: uncharacterized protein (1325 aa).

The N-terminal stretch at 1-18 (MNRIYRVIWNCTLQVFQA) is a signal peptide. The N-palmitoyl cysteine moiety is linked to residue cysteine 19. Cysteine 19 is lipidated: S-diacylglycerol cysteine.

To E.coli YfaL.

It localises to the cell membrane. This is an uncharacterized protein from Escherichia coli (strain K12).